We begin with the raw amino-acid sequence, 172 residues long: Lipoprotein signal peptidase (172 aa).

3 helical membrane passes run 10–30 (LIWL…KAWV), 68–88 (WQLW…AFWL), and 98–118 (SALP…DRLM). Active-site residues include Asp124 and Asp142. A helical membrane pass occupies residues 138–158 (FNIADSAIVGGAIGIAVFGLF).

Belongs to the peptidase A8 family.

It localises to the cell inner membrane. The enzyme catalyses Release of signal peptides from bacterial membrane prolipoproteins. Hydrolyzes -Xaa-Yaa-Zaa-|-(S,diacylglyceryl)Cys-, in which Xaa is hydrophobic (preferably Leu), and Yaa (Ala or Ser) and Zaa (Gly or Ala) have small, neutral side chains.. The protein operates within protein modification; lipoprotein biosynthesis (signal peptide cleavage). Functionally, this protein specifically catalyzes the removal of signal peptides from prolipoproteins. This Xanthomonas axonopodis pv. citri (strain 306) protein is Lipoprotein signal peptidase.